The following is a 574-amino-acid chain: Glycine--tRNA ligase (574 aa).

Substrate contacts are provided by Arg96 and Glu162. ATP is bound by residues 194-196 (RNE), 204-209 (IRLREF), 327-328 (EC), and 450-453 (GIDR). Residue 209–213 (FTQAE) coordinates substrate. 446 to 450 (EPSYG) contacts substrate.

This sequence belongs to the class-II aminoacyl-tRNA synthetase family.

It localises to the cytoplasm. It catalyses the reaction tRNA(Gly) + glycine + ATP = glycyl-tRNA(Gly) + AMP + diphosphate. In terms of biological role, catalyzes the attachment of glycine to tRNA(Gly). The chain is Glycine--tRNA ligase from Methanococcus maripaludis (strain C6 / ATCC BAA-1332).